The primary structure comprises 219 residues: 2-C-methyl-D-erythritol 4-phosphate cytidylyltransferase (219 aa).

The protein belongs to the IspD/TarI cytidylyltransferase family. IspD subfamily.

It carries out the reaction 2-C-methyl-D-erythritol 4-phosphate + CTP + H(+) = 4-CDP-2-C-methyl-D-erythritol + diphosphate. The protein operates within isoprenoid biosynthesis; isopentenyl diphosphate biosynthesis via DXP pathway; isopentenyl diphosphate from 1-deoxy-D-xylulose 5-phosphate: step 2/6. Functionally, catalyzes the formation of 4-diphosphocytidyl-2-C-methyl-D-erythritol from CTP and 2-C-methyl-D-erythritol 4-phosphate (MEP). The chain is 2-C-methyl-D-erythritol 4-phosphate cytidylyltransferase from Chlamydia trachomatis serovar L2 (strain ATCC VR-902B / DSM 19102 / 434/Bu).